The following is a 198-amino-acid chain: Recombination protein RecR (198 aa).

The C4-type zinc finger occupies 58-73; that stretch reads CSICGNYTDSDPCAIC. In terms of domain architecture, Toprim spans 81 to 175; sequence SIICVIEQPK…KVTRIAHGVP (95 aa).

It belongs to the RecR family.

In terms of biological role, may play a role in DNA repair. It seems to be involved in an RecBC-independent recombinational process of DNA repair. It may act with RecF and RecO. This chain is Recombination protein RecR, found in Clostridium novyi (strain NT).